The chain runs to 275 residues: Translation initiation factor 2 subunit alpha (275 aa).

Positions 12 to 83 constitute an S1 motif domain; the sequence is GELVVATVKR…KKGHIDLSLR (72 aa).

The protein belongs to the eIF-2-alpha family. In terms of assembly, heterotrimer composed of an alpha, a beta and a gamma chain.

Functionally, eIF-2 functions in the early steps of protein synthesis by forming a ternary complex with GTP and initiator tRNA. This is Translation initiation factor 2 subunit alpha from Pyrococcus furiosus (strain ATCC 43587 / DSM 3638 / JCM 8422 / Vc1).